Reading from the N-terminus, the 745-residue chain is MNNGIDPENETNKKGAIGKNPEEKITVEQTNTKNNLQEHGKMENMDQHHTHGHMERHQQMDHGHMSGMDHSHMDHEDMSGMNHSHMGHENMSGMDHSMHMGNFKQKFWLSLILAIPIILFSPMMGMSFPFQVTFPGSNWVVLVLATILFIYGGQPFLSGAKMELKQKSPAMMTLIAMGITVAYVYSVYSFIANLINPHTHVMDFFWELATLIVIMLLGHWIEMNAVSNASDALQKLAELLPESVKRLKKDGTEETVSLKEVHEGDRLIVRAGDKMPTDGTIDKGHTIVDESAVTGESKGVKKQVGDSVIGGSINGDGTIEITVTGTGENGYLAKVMEMVRKAQGEKSKLEFLSDKVAKWLFYVALVVGIIAFIAWLFLANLPDALERMVTVFIIACPHALGLAIPLVVARSTSIAAKNGLLLKNRNAMEQANDLDVIMLDKTGTLTQGKFTVTGIEILDEAYQEEEILKYIGALEAHANHPLAIGIMNYLKEKKITPYQAQEQKNLAGVGLEATVEDKDVKIINEKEAKRLGLKIDPERLKNYEAQGNTVSFLVVSDKLVAVIALGDVIKPEAKEFIQAIKEKNIIPVMLTGDNPKAAQAVAEYLGINEYYGGLLPDDKEAIVQRYLDQGKKVIMVGDGINDAPSLARATIGMAIGAGTDIAIDSADVVLTNSDPKDILHFLELAKETRRKMIQNLWWGAGYNIIAIPLAAGILAPIGLILSPAVGAVLMSLSTVVVALNALTLK.

Residues 1-76 (MNNGIDPENE…GMDHSHMDHE (76 aa)) form a disordered region. The Cytoplasmic segment spans residues 1–108 (MNNGIDPENE…HMGNFKQKFW (108 aa)). Basic and acidic residues predominate over residues 36–76 (LQEHGKMENMDQHHTHGHMERHQQMDHGHMSGMDHSHMDHE). 3 repeat units span residues 60 to 71 (MDHGHMSGMDHS), 73 to 84 (MDHEDMSGMNHS), and 86 to 97 (MGHENMSGMDHS). Residues 60-97 (MDHGHMSGMDHSHMDHEDMSGMNHSHMGHENMSGMDHS) are 3 X 12 AA approximate repeats. The helical transmembrane segment at 109–128 (LSLILAIPIILFSPMMGMSF) threads the bilayer. At 129 to 139 (PFQVTFPGSNW) the chain is on the extracellular side. The helical transmembrane segment at 140 to 160 (VVLVLATILFIYGGQPFLSGA) threads the bilayer. Residues 161–170 (KMELKQKSPA) are Cytoplasmic-facing. A helical membrane pass occupies residues 171 to 191 (MMTLIAMGITVAYVYSVYSFI). Residues 192-200 (ANLINPHTH) are Extracellular-facing. The chain crosses the membrane as a helical span at residues 201–217 (VMDFFWELATLIVIMLL). Residues 218–359 (GHWIEMNAVS…EFLSDKVAKW (142 aa)) are Cytoplasmic-facing. Residues 360–379 (LFYVALVVGIIAFIAWLFLA) form a helical membrane-spanning segment. Topologically, residues 380 to 388 (NLPDALERM) are extracellular. Residues 389–409 (VTVFIIACPHALGLAIPLVVA) form a helical membrane-spanning segment. Over 410 to 703 (RSTSIAAKNG…QNLWWGAGYN (294 aa)) the chain is Cytoplasmic. Asp-440 (4-aspartylphosphate intermediate) is an active-site residue. Positions 638 and 642 each coordinate Mg(2+). Residues 704 to 721 (IIAIPLAAGILAPIGLIL) form a helical membrane-spanning segment. Residues 722–723 (SP) lie on the Extracellular side of the membrane. The chain crosses the membrane as a helical span at residues 724–744 (AVGAVLMSLSTVVVALNALTL). Residue Lys-745 is a topological domain, cytoplasmic.

It belongs to the cation transport ATPase (P-type) (TC 3.A.3) family. Type IB subfamily. As to quaternary structure, monomer.

Its subcellular location is the cell membrane. It catalyses the reaction Cu(+)(in) + ATP + H2O = Cu(+)(out) + ADP + phosphate + H(+). Its activity is regulated as follows. Inhibited by vanadate. In terms of biological role, involved in copper export. Can also export silver. The sequence is that of Copper-exporting P-type ATPase B (copB) from Enterococcus hirae (strain ATCC 9790 / DSM 20160 / JCM 8729 / LMG 6399 / NBRC 3181 / NCIMB 6459 / NCDO 1258 / NCTC 12367 / WDCM 00089 / R).